The sequence spans 708 residues: Exocyst complex component 5 (708 aa).

A2 carries the post-translational modification N-acetylalanine. The stretch at 40–101 (KRLLEEFVNH…AFQHFQELDE (62 aa)) forms a coiled coil. Residues T122, T395, and T405 each carry the phosphothreonine modification. Residue S412 is modified to Phosphoserine.

This sequence belongs to the SEC10 family. As to quaternary structure, the exocyst complex is composed of EXOC1, EXOC2, EXOC3, EXOC4, EXOC5, EXOC6, EXOC7 and EXOC8. Interacts with EXOC3L1. In terms of tissue distribution, ubiquitous.

It is found in the cytoplasm. It localises to the midbody. Its function is as follows. Component of the exocyst complex involved in the docking of exocytic vesicles with fusion sites on the plasma membrane. The chain is Exocyst complex component 5 (EXOC5) from Homo sapiens (Human).